The primary structure comprises 587 residues: Monocopper oxidase-like protein SKU5 (587 aa).

An N-terminal signal peptide occupies residues 1–20 (MDLFKILLLVFFVNISFCFA). 2 N-linked (GlcNAc...) asparagine glycosylation sites follow: N14 and N58. H80 contributes to the Cu cation binding site. 10 N-linked (GlcNAc...) asparagine glycosylation sites follow: N107, N169, N200, N257, N278, N293, N342, N362, N430, and N444. H452 is a binding site for Cu cation. Residue N534 is glycosylated (N-linked (GlcNAc...) asparagine). A lipid anchor (GPI-anchor amidated serine) is attached at S562. A propeptide spans 563-587 (ASKSIGFTSLSMVVMALVMMMMLQH) (removed in mature form).

Belongs to the multicopper oxidase family. Requires Cu cation as cofactor. Expressed in roots, hypocotyls, cotyledons, leaves, stems and flowers.

The protein localises to the secreted. It is found in the cell wall. The protein resides in the cell membrane. Functionally, may be a monocopper oxidase of unknown specificity. Involved in directional growth processes, possibly by participating in cell wall expansion. This chain is Monocopper oxidase-like protein SKU5 (SKU5), found in Arabidopsis thaliana (Mouse-ear cress).